An 873-amino-acid chain; its full sequence is Leucine--tRNA ligase (873 aa).

Residues 42-52 carry the 'HIGH' region motif; the sequence is PYPSGKLHMGH. A disordered region spans residues 624–643; it reads PVEIGGTEKMSKSKNNGVDP. Residues 632–636 carry the 'KMSKS' region motif; the sequence is KMSKS. Lysine 635 is a binding site for ATP.

Belongs to the class-I aminoacyl-tRNA synthetase family.

It localises to the cytoplasm. The catalysed reaction is tRNA(Leu) + L-leucine + ATP = L-leucyl-tRNA(Leu) + AMP + diphosphate. The chain is Leucine--tRNA ligase from Pseudomonas paraeruginosa (strain DSM 24068 / PA7) (Pseudomonas aeruginosa (strain PA7)).